Consider the following 238-residue polypeptide: Probable transcriptional regulatory protein SPH_2064 (238 aa).

This sequence belongs to the TACO1 family. YeeN subfamily.

The protein localises to the cytoplasm. The protein is Probable transcriptional regulatory protein SPH_2064 of Streptococcus pneumoniae (strain Hungary19A-6).